A 252-amino-acid chain; its full sequence is Imidazole glycerol phosphate synthase subunit HisF (252 aa).

Residues D11 and D130 contribute to the active site.

Belongs to the HisA/HisF family. Heterodimer of HisH and HisF.

It is found in the cytoplasm. It catalyses the reaction 5-[(5-phospho-1-deoxy-D-ribulos-1-ylimino)methylamino]-1-(5-phospho-beta-D-ribosyl)imidazole-4-carboxamide + L-glutamine = D-erythro-1-(imidazol-4-yl)glycerol 3-phosphate + 5-amino-1-(5-phospho-beta-D-ribosyl)imidazole-4-carboxamide + L-glutamate + H(+). It participates in amino-acid biosynthesis; L-histidine biosynthesis; L-histidine from 5-phospho-alpha-D-ribose 1-diphosphate: step 5/9. Its function is as follows. IGPS catalyzes the conversion of PRFAR and glutamine to IGP, AICAR and glutamate. The HisF subunit catalyzes the cyclization activity that produces IGP and AICAR from PRFAR using the ammonia provided by the HisH subunit. This Staphylococcus epidermidis (strain ATCC 12228 / FDA PCI 1200) protein is Imidazole glycerol phosphate synthase subunit HisF.